Reading from the N-terminus, the 238-residue chain is MRPAGRSANQVRPVTLTRNYTKHAEGSVLVEFGDTKVLCTASIEEGVPRFLKGQGQGWITAEYGMLPRATHTRNAREAAKGKQGGRTMEIQRLIARALRAAVDLKTLGEFTITLDCDVIQADGGTRTASISGACVALADALNKLVANGKLKTNPMKGMVAAVSVGIVNGEALCDLEYVEDSAAETDMNVVMTEDGRIIEVQGTAEGEPFSHEELLTLLALARGGIESIVATQKAALEN.

Residues arginine 86 and 124–126 (GTR) contribute to the phosphate site.

This sequence belongs to the RNase PH family. In terms of assembly, homohexameric ring arranged as a trimer of dimers.

It catalyses the reaction tRNA(n+1) + phosphate = tRNA(n) + a ribonucleoside 5'-diphosphate. Phosphorolytic 3'-5' exoribonuclease that plays an important role in tRNA 3'-end maturation. Removes nucleotide residues following the 3'-CCA terminus of tRNAs; can also add nucleotides to the ends of RNA molecules by using nucleoside diphosphates as substrates, but this may not be physiologically important. Probably plays a role in initiation of 16S rRNA degradation (leading to ribosome degradation) during starvation. In Citrobacter koseri (strain ATCC BAA-895 / CDC 4225-83 / SGSC4696), this protein is Ribonuclease PH.